The following is a 218-amino-acid chain: Phosphatidylserine decarboxylase proenzyme (218 aa).

The active-site Schiff-base intermediate with substrate; via pyruvic acid is Ser-187. Residue Ser-187 is modified to Pyruvic acid (Ser); by autocatalysis.

Belongs to the phosphatidylserine decarboxylase family. PSD-A subfamily. As to quaternary structure, heterodimer of a large membrane-associated beta subunit and a small pyruvoyl-containing alpha subunit. Pyruvate serves as cofactor. Is synthesized initially as an inactive proenzyme. Formation of the active enzyme involves a self-maturation process in which the active site pyruvoyl group is generated from an internal serine residue via an autocatalytic post-translational modification. Two non-identical subunits are generated from the proenzyme in this reaction, and the pyruvate is formed at the N-terminus of the alpha chain, which is derived from the carboxyl end of the proenzyme. The post-translation cleavage follows an unusual pathway, termed non-hydrolytic serinolysis, in which the side chain hydroxyl group of the serine supplies its oxygen atom to form the C-terminus of the beta chain, while the remainder of the serine residue undergoes an oxidative deamination to produce ammonia and the pyruvoyl prosthetic group on the alpha chain.

It is found in the cell membrane. The enzyme catalyses a 1,2-diacyl-sn-glycero-3-phospho-L-serine + H(+) = a 1,2-diacyl-sn-glycero-3-phosphoethanolamine + CO2. The protein operates within phospholipid metabolism; phosphatidylethanolamine biosynthesis; phosphatidylethanolamine from CDP-diacylglycerol: step 2/2. In terms of biological role, catalyzes the formation of phosphatidylethanolamine (PtdEtn) from phosphatidylserine (PtdSer). The protein is Phosphatidylserine decarboxylase proenzyme of Geobacter metallireducens (strain ATCC 53774 / DSM 7210 / GS-15).